Here is a 110-residue protein sequence, read N- to C-terminus: MDKRNKANVVLSLCSMFASRGNCIPIPIVFNIYMRAFPKLVGRGTSTYARRRRARSILRCERCYRVYPPLPFSKKCDNRTCVPGISYNIKVADFIKWGVTEVIPHPGFNF.

Residues 50-53 are basic; it reads RRRR. The C4-type zinc finger occupies 60-81; sequence CERCYRVYPPLPFSKKCDNRTC.

This sequence belongs to the carlaviruses nucleic acid-binding protein family.

Its function is as follows. Suppressor of viral-induced RNA silencing. The potential mechanism of action is based on sequestering siRNAs. The sequence is that of RNA silencing suppressor from Helenium virus S (HelVS).